A 400-amino-acid chain; its full sequence is Putative C-type lectin domain family 20 member A (400 aa).

Positions M1–S20 are cleaved as a signal peptide. C-type lectin domains lie at L26 to Y131 and I159 to F275. 4 cysteine pairs are disulfide-bonded: C40–C130, C105–C122, C180–C274, and C248–C266. Residues E287–G346 form a disordered region.

In Homo sapiens (Human), this protein is Putative C-type lectin domain family 20 member A.